Reading from the N-terminus, the 91-residue chain is Cell division topological specificity factor (91 aa).

The protein belongs to the MinE family.

Its function is as follows. Prevents the cell division inhibition by proteins MinC and MinD at internal division sites while permitting inhibition at polar sites. This ensures cell division at the proper site by restricting the formation of a division septum at the midpoint of the long axis of the cell. In Bradyrhizobium diazoefficiens (strain JCM 10833 / BCRC 13528 / IAM 13628 / NBRC 14792 / USDA 110), this protein is Cell division topological specificity factor.